Reading from the N-terminus, the 442-residue chain is Coiled-coil domain-containing protein 91 (442 aa).

Residues 1-16 form a GGA1-binding motif region; sequence MDDDDFGGFEAAETFD. A disordered region spans residues 1–27; the sequence is MDDDDFGGFEAAETFDGEQGGNQAVSP. Phosphoserine occurs at positions 43 and 46. Disordered regions lie at residues 48 to 80 and 114 to 134; these read ELILDHDHSSPSTGHLPPDAVISSADDTHADSS and HGALALEDEPEGPGVHVSNSQ. Coiled coils occupy residues 130–210, 253–318, and 346–408; these read VSNS…GHEA, HAQH…MKDV, and ARDQ…RRLD. A homodimerization region spans residues 211 to 414; that stretch reads LSIIVDEYKA…RRLDQVTRQR (204 aa).

In terms of assembly, homodimer. Interacts with GGA1, GGA2 and AP1G1.

The protein resides in the membrane. The protein localises to the golgi apparatus. It is found in the trans-Golgi network membrane. Its subcellular location is the trans-Golgi network. Involved in the regulation of membrane traffic through the trans-Golgi network (TGN). Functions in close cooperation with the GGAs in the sorting of hydrolases to lysosomes. The polypeptide is Coiled-coil domain-containing protein 91 (Ccdc91) (Mus musculus (Mouse)).